The sequence spans 326 residues: Phospho-N-acetylmuramoyl-pentapeptide-transferase (326 aa).

Helical transmembrane passes span 3-23 (ISISAGIVTFLLTLVGIPAFI), 51-71 (TMGGLVFLIAAVVVSFLVALF), 79-99 (VGMILFILVLYGLVGFLDDFL), 115-135 (LALQLLGGVIFYLFYERGGDM), 138-158 (VFGYQVHLGIFYIIFALFWLV), 169-189 (GIDGLASISVVISLSAYGVIA), 195-215 (MDILLVIFAMIGGLLGFFVFN), 221-243 (VFMGDVGSLALGGMLAAISMALH), and 306-326 (FFFWGVGLLASLLTFAILYLM).

The protein belongs to the glycosyltransferase 4 family. MraY subfamily. Requires Mg(2+) as cofactor.

Its subcellular location is the cell membrane. It catalyses the reaction UDP-N-acetyl-alpha-D-muramoyl-L-alanyl-gamma-D-glutamyl-L-lysyl-D-alanyl-D-alanine + di-trans,octa-cis-undecaprenyl phosphate = Mur2Ac(oyl-L-Ala-gamma-D-Glu-L-Lys-D-Ala-D-Ala)-di-trans,octa-cis-undecaprenyl diphosphate + UMP. Its pathway is cell wall biogenesis; peptidoglycan biosynthesis. Catalyzes the initial step of the lipid cycle reactions in the biosynthesis of the cell wall peptidoglycan: transfers peptidoglycan precursor phospho-MurNAc-pentapeptide from UDP-MurNAc-pentapeptide onto the lipid carrier undecaprenyl phosphate, yielding undecaprenyl-pyrophosphoryl-MurNAc-pentapeptide, known as lipid I. The polypeptide is Phospho-N-acetylmuramoyl-pentapeptide-transferase (Streptococcus pneumoniae (strain Taiwan19F-14)).